Reading from the N-terminus, the 143-residue chain is Peptide methionine sulfoxide reductase MsrB (143 aa).

The MsrB domain occupies 16 to 139; sequence DAELRRRLTP…NSAALNFEAK (124 aa). Cysteine 55, cysteine 58, cysteine 104, and cysteine 107 together coordinate Zn(2+). The Nucleophile role is filled by cysteine 128.

It belongs to the MsrB Met sulfoxide reductase family. It depends on Zn(2+) as a cofactor.

It catalyses the reaction L-methionyl-[protein] + [thioredoxin]-disulfide + H2O = L-methionyl-(R)-S-oxide-[protein] + [thioredoxin]-dithiol. The sequence is that of Peptide methionine sulfoxide reductase MsrB from Burkholderia pseudomallei (strain 1710b).